Consider the following 74-residue polypeptide: UPF0346 protein LCA_0996 (74 aa).

The protein belongs to the UPF0346 family.

This chain is UPF0346 protein LCA_0996, found in Latilactobacillus sakei subsp. sakei (strain 23K) (Lactobacillus sakei subsp. sakei).